A 90-amino-acid chain; its full sequence is Small ribosomal subunit protein bS16 (90 aa).

It belongs to the bacterial ribosomal protein bS16 family.

The polypeptide is Small ribosomal subunit protein bS16 (Bacillus anthracis (strain A0248)).